Here is a 405-residue protein sequence, read N- to C-terminus: Imidazolonepropionase (405 aa).

Positions 73 and 75 each coordinate Fe(3+). Residues His-73 and His-75 each coordinate Zn(2+). 4-imidazolone-5-propanoate-binding residues include Arg-82, Tyr-145, and His-178. Tyr-145 contributes to the N-formimidoyl-L-glutamate binding site. Residue His-243 coordinates Fe(3+). Residue His-243 participates in Zn(2+) binding. A 4-imidazolone-5-propanoate-binding site is contributed by Gln-246. Asp-318 lines the Fe(3+) pocket. Asp-318 lines the Zn(2+) pocket. N-formimidoyl-L-glutamate is bound by residues Asn-320 and Gly-322. Residue Thr-323 coordinates 4-imidazolone-5-propanoate.

Belongs to the metallo-dependent hydrolases superfamily. HutI family. Requires Zn(2+) as cofactor. Fe(3+) serves as cofactor.

It is found in the cytoplasm. It carries out the reaction 4-imidazolone-5-propanoate + H2O = N-formimidoyl-L-glutamate. The protein operates within amino-acid degradation; L-histidine degradation into L-glutamate; N-formimidoyl-L-glutamate from L-histidine: step 3/3. Functionally, catalyzes the hydrolytic cleavage of the carbon-nitrogen bond in imidazolone-5-propanoate to yield N-formimidoyl-L-glutamate. It is the third step in the universal histidine degradation pathway. The polypeptide is Imidazolonepropionase (Brucella suis (strain ATCC 23445 / NCTC 10510)).